The sequence spans 133 residues: MKKNITKTIIASTVIAAGLLTQTNDAKAFFSYEWKGLEIAKNLADQAKKDDERIDKLMKESDKNLTPYKAETVNDLYLIVKKLSQGDVKKAVVRIKDGGPRDYYTFDLTRPLEENRKNIKVVKNGEIDSITWY.

The signal sequence occupies residues 1 to 28 (MKKNITKTIIASTVIAAGLLTQTNDAKA).

This sequence belongs to the CHIPS/FLIPr family.

It is found in the secreted. Its function is as follows. May be involved in countering the first line of host defense mechanisms. Impairs the leukocyte response to FPRL1 agonists by binding directly to host FPRL1. The protein is FPRL1 inhibitory protein (flr) of Staphylococcus aureus (strain USA300).